The primary structure comprises 223 residues: MKLFIFTCLLAVALAKHKSEQQSSSEESVSISQEKFKDKNMDTISSEETICASLCKEATKNTPKMAFFSRSSSEEFADIHRENKKDQLYQKWMVPQYNPDFYQRPVVMSPWNQIYTRPYPIVLPTLGKEQISTIEDILKKTTAVESSSSSSTEKSTDVFIKKTKMDEVQKLIQSLLNIIHEYSQKAFWSQTLEDVDQYLKFVMPWNHYNTNADQVDASQERQA.

The signal sequence occupies residues 1–15 (MKLFIFTCLLAVALA). 8 positions are modified to phosphoserine: Ser-23, Ser-24, Ser-25, Ser-28, Ser-46, Ser-71, Ser-72, and Ser-73. 2 repeats span residues 76 to 128 (FADI…TLGK) and 129 to 223 (EQIS…ERQA). Phosphoserine occurs at positions 132, 147, and 155.

This sequence belongs to the alpha-casein family. As to expression, mammary gland specific. Secreted in milk.

It is found in the secreted. Important role in the capacity of milk to transport calcium phosphate. The protein is Alpha-S2-casein (CSN1S2) of Cavia porcellus (Guinea pig).